The chain runs to 261 residues: Phosphatidylglycerol--prolipoprotein diacylglyceryl transferase (261 aa).

Transmembrane regions (helical) follow at residues 19 to 39 (VHWYGLMYLVGFAMAWGLALY), 56 to 76 (LIFYGALGLIIGGRLGYMLFY), 92 to 112 (WRGGMSFHGGLIGVIVTTWIF), 126 to 146 (FVVPLVPLGLAAGRIGNFING), 173 to 193 (QLYEFLLEGALLFIVIWWFSA), 199 to 219 (FAVSSLFLLCYGLFRFTAEFF), and 227 to 247 (GFVAFGWLTRGQELSLPMIII). Residue Arg139 participates in a 1,2-diacyl-sn-glycero-3-phospho-(1'-sn-glycerol) binding.

The protein belongs to the Lgt family.

Its subcellular location is the cell inner membrane. It catalyses the reaction L-cysteinyl-[prolipoprotein] + a 1,2-diacyl-sn-glycero-3-phospho-(1'-sn-glycerol) = an S-1,2-diacyl-sn-glyceryl-L-cysteinyl-[prolipoprotein] + sn-glycerol 1-phosphate + H(+). Its pathway is protein modification; lipoprotein biosynthesis (diacylglyceryl transfer). Functionally, catalyzes the transfer of the diacylglyceryl group from phosphatidylglycerol to the sulfhydryl group of the N-terminal cysteine of a prolipoprotein, the first step in the formation of mature lipoproteins. The chain is Phosphatidylglycerol--prolipoprotein diacylglyceryl transferase from Coxiella burnetii (strain Dugway 5J108-111).